The sequence spans 316 residues: Small ribosomal subunit biogenesis GTPase RsgA (316 aa).

A disordered region spans residues 1–20; it reads MSKLSHQQQRRIHNHRQNKL. The segment covering 8-18 has biased composition (basic residues); sequence QQRRIHNHRQN. A CP-type G domain is found at 92–251; it reads AGKLKPVASN…IIDTPGVRGF (160 aa). Residues 139–142 and 193–201 each bind GTP; these read NKSD and GQSGVGKSS. Residues C275, C280, H282, and C288 each contribute to the Zn(2+) site.

It belongs to the TRAFAC class YlqF/YawG GTPase family. RsgA subfamily. In terms of assembly, monomer. Associates with 30S ribosomal subunit, binds 16S rRNA. Zn(2+) serves as cofactor.

It is found in the cytoplasm. Its function is as follows. One of several proteins that assist in the late maturation steps of the functional core of the 30S ribosomal subunit. Helps release RbfA from mature subunits. May play a role in the assembly of ribosomal proteins into the subunit. Circularly permuted GTPase that catalyzes slow GTP hydrolysis, GTPase activity is stimulated by the 30S ribosomal subunit. This is Small ribosomal subunit biogenesis GTPase RsgA from Dichelobacter nodosus (strain VCS1703A).